The sequence spans 152 residues: S-protein homolog 4 (152 aa).

Positions 1–23 (MTTMLKTQVHVVVIYLLIQIAFS) are cleaved as a signal peptide. Asn-71 is a glycosylation site (N-linked (GlcNAc...) asparagine).

This sequence belongs to the plant self-incompatibility (S1) protein family.

Its subcellular location is the secreted. The chain is S-protein homolog 4 from Arabidopsis thaliana (Mouse-ear cress).